Consider the following 740-residue polypeptide: Gramillins biosynthetic cluster protein FGSG_11657 (740 aa).

Disordered stretches follow at residues 353–391 (QADS…SSIP), 414–434 (SKLS…DAAS), 514–535 (PKEQ…GSSD), and 656–686 (EHEG…PQGD). Residues 656–667 (EHEGEGRADTNR) show a composition bias toward basic and acidic residues. The segment covering 668-682 (HVSTQSNMPTEQSLL) has biased composition (polar residues).

Its pathway is mycotoxin biosynthesis. In terms of biological role, part of the gene cluster that mediates the biosynthesis of gramillins A and B, bicyclic lipopeptides that induce cell death in maize leaves but not in wheat leaves. The nonribosomal peptide synthetase GRA1 incorporates respectively a glutamic adic (Glu), a leucine (Leu), a serine (Ser), a hydroxyglutamine (HOGln), a 2-amino decanoic acid, and 2 cysteins (CysB and CysA). The biosynthesis of 2-amino decanoic acid incorporated in gramillins could be initiated by a fatty acid synthase composed of the alpha and beta subunits FGSG_00036 and FGSG_11656. The cytochrome P450 monooxygenase FGSG_15680 could hydroxylate the fatty acid chain. Subsequent oxidation to the ketone by the oxidoreductase FGSG_00048 and transamination by aminotransferase FGSG_00049 could form 2-amino-decanoic acid. On the other hand, FGSG_15680 could also be responsible for the HO-modified glutamine at the gamma-position. Whether hydroxylation occurs on the fully assembled product or on the Gln residue prior to assembly into the gramillins requires further proof. The thioredoxin FGSG_00043 could also be required for the disulfide-bond formation between CysA and CysB. The specific involvement of the remaining proteins from the cluster is more difficult to discern, but could have broader regulatory (FGSG_00040 and FGSG_11657) or enzymatic functions (FGSG_00044 and FGSG_00045). The final C-domain of GRA1 does not possess the expected sequence of a termination CT domain, often implicated in macrocyclization and release of a cyclopeptidein fungal NRPs; and the thioesterase FGSG_00047 may act in concert with the terminal C-domain of GRA1 to catalyze the formation of the macrocyclic anhydride and release of the products. The protein is Gramillins biosynthetic cluster protein FGSG_11657 of Gibberella zeae (strain ATCC MYA-4620 / CBS 123657 / FGSC 9075 / NRRL 31084 / PH-1) (Wheat head blight fungus).